The chain runs to 337 residues: Serpentine receptor class delta-50 (337 aa).

7 helical membrane-spanning segments follow: residues 10–30, 48–68, 107–127, 147–167, 202–222, 250–270, and 280–300; these read VLIL…SQLL, IYLF…FVLQ, VLFH…IIAF, QLVI…LSPN, SSQT…ALVF, GLTL…TYYI, and LFVE…DPLL.

The protein belongs to the nematode receptor-like protein srd family.

Its subcellular location is the membrane. In Caenorhabditis elegans, this protein is Serpentine receptor class delta-50.